The primary structure comprises 123 residues: Small ribosomal subunit protein uS13 (123 aa).

The tract at residues 92–123 (HRRGLPVRGQKTKTNARTRKGPKKLVVSRKKK) is disordered.

Belongs to the universal ribosomal protein uS13 family. Part of the 30S ribosomal subunit. Forms a loose heterodimer with protein S19. Forms two bridges to the 50S subunit in the 70S ribosome.

Its function is as follows. Located at the top of the head of the 30S subunit, it contacts several helices of the 16S rRNA. In the 70S ribosome it contacts the 23S rRNA (bridge B1a) and protein L5 of the 50S subunit (bridge B1b), connecting the 2 subunits; these bridges are implicated in subunit movement. Contacts the tRNAs in the A and P-sites. This Clostridium tetani (strain Massachusetts / E88) protein is Small ribosomal subunit protein uS13.